The sequence spans 100 residues: Urease subunit gamma (100 aa).

Belongs to the urease gamma subunit family. As to quaternary structure, heterotrimer of UreA (gamma), UreB (beta) and UreC (alpha) subunits. Three heterotrimers associate to form the active enzyme.

The protein resides in the cytoplasm. The catalysed reaction is urea + 2 H2O + H(+) = hydrogencarbonate + 2 NH4(+). The protein operates within nitrogen metabolism; urea degradation; CO(2) and NH(3) from urea (urease route): step 1/1. This chain is Urease subunit gamma, found in Frankia alni (strain DSM 45986 / CECT 9034 / ACN14a).